Here is a 238-residue protein sequence, read N- to C-terminus: uncharacterized protein (238 aa).

It belongs to the chlamydial CPn_0658/CT_538/TC_0825 family.

This is an uncharacterized protein from Chlamydia trachomatis serovar D (strain ATCC VR-885 / DSM 19411 / UW-3/Cx).